A 103-amino-acid chain; its full sequence is uncharacterized protein (103 aa).

The segment at 69-103 (SSISYPGGGGGGGGSAKSLSSSKPGGGGGSPLIFL) is disordered. Gly residues-rich tracts occupy residues 74–83 (PGGGGGGGGS) and 92–103 (PGGGGGSPLIFL).

This is an uncharacterized protein from Saccharomyces cerevisiae (strain ATCC 204508 / S288c) (Baker's yeast).